We begin with the raw amino-acid sequence, 327 residues long: Cytochrome f (327 aa).

A signal peptide spans 1 to 24 (MKRIGLVFCALLLLLGMGARPAAA). Tyr25, Cys45, Cys48, and His49 together coordinate heme. The chain crosses the membrane as a helical span at residues 293-313 (VKWLVAFLAAITITQVLLVLK).

Belongs to the cytochrome f family. As to quaternary structure, the 4 large subunits of the cytochrome b6-f complex are cytochrome b6, subunit IV (17 kDa polypeptide, PetD), cytochrome f and the Rieske protein, while the 4 small subunits are PetG, PetL, PetM and PetN. The complex functions as a dimer. The cofactor is heme.

It is found in the cellular thylakoid membrane. Functionally, component of the cytochrome b6-f complex, which mediates electron transfer between photosystem II (PSII) and photosystem I (PSI), cyclic electron flow around PSI, and state transitions. This is Cytochrome f from Synechococcus sp. (strain JA-2-3B'a(2-13)) (Cyanobacteria bacterium Yellowstone B-Prime).